Here is a 1416-residue protein sequence, read N- to C-terminus: Isonitrile lipopeptide synthase (1416 aa).

Residues 188-215 (LRETAKVAEALRRQADAVQRELTAEAGQ) are a coiled coil. Residues 965 to 1028 (RVWSRHLGRP…NLVCDLGSNP (64 aa)) enclose the Carrier domain. The residue at position 988 (serine 988) is an O-(pantetheine 4'-phosphoryl)serine.

Belongs to the ATP-dependent AMP-binding enzyme family. It depends on pantetheine 4'-phosphate as a cofactor.

It carries out the reaction 2 a (3R)-3-isocyanyl-fatty acyl-[ACP] + L-lysine + ATP + 2 NADPH = an isonitrile lipopeptide + 2 holo-[ACP] + AMP + diphosphate + 2 NADP(+). Functionally, nonribosomal peptide synthetase (NRPS) involved in the biosynthesis of a unique class of isonitrile lipopeptides (INLPs) that seem to play a role in metal acquisition in M.marinum. Catalyzes the final step in the pathway, i.e. the condensation of a (3R)-3-isocyanyl-fatty acyl-[ACP] to both amino groups of a lysine, producing isonitrile lipopeptides. The polypeptide is Isonitrile lipopeptide synthase (Mycobacterium marinum (strain ATCC BAA-535 / M)).